The primary structure comprises 123 residues: MSWIEPIISHFCQDLGVPTSSPLSPLIQLEMAQSGTLQLEQHGATLTLWLARSLAWHQCEDAMVKALTLTAAQKSGALPLRAGWLGENQLVLFVSLDERSLTLPLLHQAFEQLLRLQQEVLAP.

Interacts with YscB to form a complex which specifically binds to YopN.

It localises to the cytoplasm. The protein resides in the cell inner membrane. Functions as a specific chaperone for YopN. It could facilitate the secretion and the subsequent translocation of YopN. This chain is Chaperone protein SycN (sycN), found in Yersinia enterocolitica.